The sequence spans 354 residues: UPF0283 protein YcjF (354 aa).

The next 3 helical transmembrane spans lie at 71 to 91 (MVTVGIALFGVSVIAQSVQWV), 101 to 121 (IALGATTAGGLIVLAGVGSVV), and 214 to 234 (ESALMIAVSPLALVDMAFIAW).

It belongs to the UPF0283 family.

It is found in the cell inner membrane. The sequence is that of UPF0283 protein YcjF (ycjF) from Yersinia enterocolitica.